The sequence spans 137 residues: Protein CTLA-2-alpha (137 aa).

The N-terminal stretch at 1–27 (MMVSICEQKLQHFSAVFLLILCLGMMS) is a signal peptide. 2 consecutive repeat copies span residues 39–41 (EWK) and 42–44 (EWK). A 2 X 3 AA tandem repeats of E-W-K region spans residues 39 to 44 (EWKEWK). The disordered stretch occupies residues 114-137 (APDLPEYEDLGKNSYLTPGRAQPE).

The protein to the propeptide regions of cysteine proteases.

Its subcellular location is the secreted. Not known, expressed in activated T-cell. In Mus musculus (Mouse), this protein is Protein CTLA-2-alpha (Ctla2a).